Here is a 44-residue protein sequence, read N- to C-terminus: uncharacterized protein (44 aa).

Residues 19 to 39 traverse the membrane as a helical segment; sequence AVGFVVSFGFFAFLFVMATVI.

The protein resides in the cell membrane. This is an uncharacterized protein from Bacillus subtilis (strain 168).